Reading from the N-terminus, the 356-residue chain is sn-glycerol-3-phosphate import ATP-binding protein UgpC (356 aa).

The region spanning 4–235 (LKLQAVTKSW…PASLFVASFI (232 aa)) is the ABC transporter domain. Residue 37 to 44 (GPSGCGKS) participates in ATP binding.

This sequence belongs to the ABC transporter superfamily. sn-glycerol-3-phosphate importer (TC 3.A.1.1.3) family. The complex is composed of two ATP-binding proteins (UgpC), two transmembrane proteins (UgpA and UgpE) and a solute-binding protein (UgpB).

The protein localises to the cell inner membrane. The catalysed reaction is sn-glycerol 3-phosphate(out) + ATP + H2O = sn-glycerol 3-phosphate(in) + ADP + phosphate + H(+). Functionally, part of the ABC transporter complex UgpBAEC involved in sn-glycerol-3-phosphate (G3P) import. Responsible for energy coupling to the transport system. This Shigella sonnei (strain Ss046) protein is sn-glycerol-3-phosphate import ATP-binding protein UgpC.